We begin with the raw amino-acid sequence, 310 residues long: Isoflavone reductase homolog A622 (310 aa).

NADP(+) is bound by residues 13-19 (GGTGYIG), arginine 38, and lysine 47. Residue lysine 135 is the Proton acceptor of the active site. Arginine 139 serves as a coordination point for NADP(+).

The protein belongs to the NmrA-type oxidoreductase family. Isoflavone reductase subfamily. As to quaternary structure, monomer. Expressed in roots and stems.

The protein localises to the cytoplasm. Its pathway is alkaloid biosynthesis; nicotine biosynthesis. NADPH-binding protein. Involved in the biosynthesis of pyridine alkaloid natural products, leading mainly to the production of anabasine, anatabine, nicotine and nornicotine, effective deterrents against herbivores with antiparasitic and pesticide properties (neurotoxins); nornicotine serves as the precursor in the synthesis of the carcinogen compound N'-nitrosonornicotine (NNN). Reductase involved in a late step of tobacco alkaloid biosynthesis. Triggers either the formation of a nicotinic acid-derived precursor or the final condensation reaction of tobacco alkaloids. This is Isoflavone reductase homolog A622 from Nicotiana sylvestris (Wood tobacco).